Reading from the N-terminus, the 327-residue chain is rRNA 2'-O-methyltransferase fibrillarin (327 aa).

The segment at 1–96 (MGTDYRNSGR…GFKGGAKTMV (96 aa)) is disordered. Residues arginine 10, arginine 19, arginine 44, arginine 49, arginine 55, arginine 65, arginine 69, and arginine 78 each carry the asymmetric dimethylarginine modification. The segment covering 22-56 (GNDRRDSGRSFGDRRPERPDFKRGDGGRGFGDRRG) has biased composition (basic and acidic residues). The segment covering 73-90 (DGPGGRGGPGGPGGGFKG) has biased composition (gly residues). Residues 181–182 (TT), 200–201 (EF), 225–226 (DA), and 245–248 (DVAQ) each bind S-adenosyl-L-methionine.

This sequence belongs to the methyltransferase superfamily. Fibrillarin family. In terms of assembly, component of box C/D small nucleolar ribonucleoprotein (snoRNP) particles. It is associated with the U3, U8 and U13 small nuclear RNAs. In terms of processing, by homology to other fibrillarins, some or all of the N-terminal domain arginines are modified to asymmetric dimethylarginine (DMA).

It localises to the nucleus. It is found in the nucleolus. The enzyme catalyses L-glutaminyl-[histone H2A] + S-adenosyl-L-methionine = N(5)-methyl-L-glutaminyl-[histone H2A] + S-adenosyl-L-homocysteine + H(+). Its function is as follows. S-adenosyl-L-methionine-dependent methyltransferase that has the ability to methylate both RNAs and proteins. Involved in pre-rRNA processing. Utilizes the methyl donor S-adenosyl-L-methionine to catalyze the site-specific 2'-hydroxyl methylation of ribose moieties in pre-ribosomal RNA. Site specificity is provided by a guide RNA that base pairs with the substrate. Methylation occurs at a characteristic distance from the sequence involved in base pairing with the guide RNA. Also acts as a protein methyltransferase by mediating methylation of 'Gln-105' of histone H2A (H2AQ105me), a modification that impairs binding of the FACT complex and is specifically present at 35S ribosomal DNA locus. This chain is rRNA 2'-O-methyltransferase fibrillarin, found in Giardia intestinalis (Giardia lamblia).